The following is a 233-amino-acid chain: Adenosylcobinamide-GDP ribazoletransferase (233 aa).

Helical transmembrane passes span 24 to 44 (LWAFPLVALVSSALPTLVLYL), 46 to 66 (LPLSNVLAVLALYFTIGLLHL), 96 to 116 (IAGLFAVVMVLFLQVYSLQLV), 117 to 137 (PFYAIFLAELNSKLAMLLALA), 156 to 176 (SGQLLGGFIFYAILLVPVVVY), 184 to 204 (LLGLAFGGYAIKVALDNFGGI), and 209 to 229 (IGAIAEITRAGTLLVVAFAGA).

It belongs to the CobS family. Mg(2+) is required as a cofactor.

Its subcellular location is the cell membrane. It carries out the reaction alpha-ribazole + adenosylcob(III)inamide-GDP = adenosylcob(III)alamin + GMP + H(+). It catalyses the reaction alpha-ribazole 5'-phosphate + adenosylcob(III)inamide-GDP = adenosylcob(III)alamin 5'-phosphate + GMP + H(+). It participates in cofactor biosynthesis; adenosylcobalamin biosynthesis; adenosylcobalamin from cob(II)yrinate a,c-diamide: step 7/7. Its function is as follows. Joins adenosylcobinamide-GDP and alpha-ribazole to generate adenosylcobalamin (Ado-cobalamin). Also synthesizes adenosylcobalamin 5'-phosphate from adenosylcobinamide-GDP and alpha-ribazole 5'-phosphate. The protein is Adenosylcobinamide-GDP ribazoletransferase of Thermococcus onnurineus (strain NA1).